Consider the following 357-residue polypeptide: Peptide chain release factor 1 (357 aa).

Q233 bears the N5-methylglutamine mark. The segment at 284-305 (RSASISADRKSQVGTGDRSERI) is disordered.

The protein belongs to the prokaryotic/mitochondrial release factor family. Post-translationally, methylated by PrmC. Methylation increases the termination efficiency of RF1.

It localises to the cytoplasm. In terms of biological role, peptide chain release factor 1 directs the termination of translation in response to the peptide chain termination codons UAG and UAA. The polypeptide is Peptide chain release factor 1 (Clostridium novyi (strain NT)).